We begin with the raw amino-acid sequence, 276 residues long: Large ribosomal subunit protein uL2 (276 aa).

The interval 213-264 (WLGRRPHNRGVVMNPVDHPHGGGEGRTSGGRHPVTPWGKPTKGYKTRTNKRT) is disordered.

This sequence belongs to the universal ribosomal protein uL2 family. As to quaternary structure, part of the 50S ribosomal subunit. Forms a bridge to the 30S subunit in the 70S ribosome.

In terms of biological role, one of the primary rRNA binding proteins. Required for association of the 30S and 50S subunits to form the 70S ribosome, for tRNA binding and peptide bond formation. It has been suggested to have peptidyltransferase activity; this is somewhat controversial. Makes several contacts with the 16S rRNA in the 70S ribosome. This chain is Large ribosomal subunit protein uL2, found in Granulibacter bethesdensis (strain ATCC BAA-1260 / CGDNIH1).